The sequence spans 301 residues: MPGIKEIRTKIKSVQNTRKITKAMEMVAASKMRKAQDRMRAGRPYATKVREIAAHLMQANPEYSHPYLVEREIKAVGVVLVTTDKGLCGGLNTNISRVTLAKLKEFDQRGIRVQATAFGNKGLGLLTRIGANLVSHEVQLGDKPDLDRLLGAIKVQLDAYLSGEIDALYVAATRFVNTMKQEPVFLRLLPLASGLDDPFQTGAETLADGAEVKSNYSWDYIYEPDAKSVIDDLLQRYVEGLLYQAVAENMASEQSARMVAMKAASDNAKKVIGDLQLVYNKTRQAAITKEISEIVGGAAAV.

It belongs to the ATPase gamma chain family. F-type ATPases have 2 components, CF(1) - the catalytic core - and CF(0) - the membrane proton channel. CF(1) has five subunits: alpha(3), beta(3), gamma(1), delta(1), epsilon(1). CF(0) has three main subunits: a, b and c.

The protein resides in the cell inner membrane. Functionally, produces ATP from ADP in the presence of a proton gradient across the membrane. The gamma chain is believed to be important in regulating ATPase activity and the flow of protons through the CF(0) complex. The polypeptide is ATP synthase gamma chain (Bordetella petrii (strain ATCC BAA-461 / DSM 12804 / CCUG 43448)).